The primary structure comprises 119 residues: Protein TusC (119 aa).

This sequence belongs to the DsrF/TusC family. In terms of assembly, heterohexamer, formed by a dimer of trimers. The hexameric TusBCD complex contains 2 copies each of TusB, TusC and TusD. The TusBCD complex interacts with TusE.

Its subcellular location is the cytoplasm. Its function is as follows. Part of a sulfur-relay system required for 2-thiolation of 5-methylaminomethyl-2-thiouridine (mnm(5)s(2)U) at tRNA wobble positions. In Shigella sonnei (strain Ss046), this protein is Protein TusC.